A 257-amino-acid chain; its full sequence is Ribonuclease PH (257 aa).

Residues Arg-88 and Gly-126–Arg-128 each bind phosphate.

It belongs to the RNase PH family. As to quaternary structure, homohexameric ring arranged as a trimer of dimers.

It carries out the reaction tRNA(n+1) + phosphate = tRNA(n) + a ribonucleoside 5'-diphosphate. In terms of biological role, phosphorolytic 3'-5' exoribonuclease that plays an important role in tRNA 3'-end maturation. Removes nucleotide residues following the 3'-CCA terminus of tRNAs; can also add nucleotides to the ends of RNA molecules by using nucleoside diphosphates as substrates, but this may not be physiologically important. Probably plays a role in initiation of 16S rRNA degradation (leading to ribosome degradation) during starvation. This Nocardia farcinica (strain IFM 10152) protein is Ribonuclease PH.